A 213-amino-acid chain; its full sequence is 3-isopropylmalate dehydratase small subunit (213 aa).

Belongs to the LeuD family. LeuD type 1 subfamily. In terms of assembly, heterodimer of LeuC and LeuD.

The enzyme catalyses (2R,3S)-3-isopropylmalate = (2S)-2-isopropylmalate. Its pathway is amino-acid biosynthesis; L-leucine biosynthesis; L-leucine from 3-methyl-2-oxobutanoate: step 2/4. In terms of biological role, catalyzes the isomerization between 2-isopropylmalate and 3-isopropylmalate, via the formation of 2-isopropylmaleate. This chain is 3-isopropylmalate dehydratase small subunit, found in Pseudomonas syringae pv. tomato (strain ATCC BAA-871 / DC3000).